Reading from the N-terminus, the 252-residue chain is MSGHNKWANIKHRKAAQDAKRSKIFTKLIREIIVAAREGGGDPETNPRLRAVIERARAANMPKDTIEKSIKKGTGELEGVDYQEIIYEAYAPAGVALYIYAMTDNKNRTAQELRHLLSKHGGSLAESGSVAWLFERKGIIEIPKDKVADFEEFAMVAIDAGAEDIIEDDPIQVVTAPEKLTEVKDNLASNGFEGEAKVTFIPKNTVKVTGADAEKVLKLISVLEDNDDVQEVYANFDIDDKEMEEIMAKLEG.

It belongs to the TACO1 family.

It localises to the cytoplasm. This Thermosipho melanesiensis (strain DSM 12029 / CIP 104789 / BI429) protein is Probable transcriptional regulatory protein Tmel_0985.